The chain runs to 235 residues: Proteasome subunit alpha type-2-A (235 aa).

Lys-64 participates in a covalent cross-link: Glycyl lysine isopeptide (Lys-Gly) (interchain with G-Cter in ubiquitin).

The protein belongs to the peptidase T1A family. In terms of assembly, component of the 20S core complex of the 26S proteasome. The 26S proteasome is composed of a core protease (CP), known as the 20S proteasome, capped at one or both ends by the 19S regulatory particle (RP/PA700). The 20S proteasome core is composed of 28 subunits that are arranged in four stacked rings, resulting in a barrel-shaped structure. The two end rings are each formed by seven alpha subunits, and the two central rings are each formed by seven beta subunits. The catalytic chamber with the active sites is on the inside of the barrel.

It localises to the cytoplasm. The protein resides in the nucleus. Functionally, the proteasome is a multicatalytic proteinase complex which is characterized by its ability to cleave peptides with Arg, Phe, Tyr, Leu, and Glu adjacent to the leaving group at neutral or slightly basic pH. The proteasome has an ATP-dependent proteolytic activity. This chain is Proteasome subunit alpha type-2-A (PAB1), found in Arabidopsis thaliana (Mouse-ear cress).